The chain runs to 115 residues: UPF0127 protein PH1112 (115 aa).

The protein belongs to the UPF0127 family.

In Pyrococcus horikoshii (strain ATCC 700860 / DSM 12428 / JCM 9974 / NBRC 100139 / OT-3), this protein is UPF0127 protein PH1112.